The following is a 418-amino-acid chain: Vacuole membrane protein HFL1 (418 aa).

At 1-5 (MENKL) the chain is on the extracellular side. A helical membrane pass occupies residues 6-26 (LCWWLYWPCVYSSIIATIISF). Residues 27–43 (YTITRHLLNYRKPYEQR) lie on the Cytoplasmic side of the membrane. A helical membrane pass occupies residues 44-64 (LSIRILLLVPIFSVSCASGII). Residues 65 to 78 (KPEAAQFYVDPIRE) are Extracellular-facing. Residues 79-99 (FYEAFVIYTFFTFLTLLLGGE) traverse the membrane as a helical segment. Residues 100–141 (RNIITVLSLNHAPTRHPIPLIGKICKPIDLSDPFDFLFVKKG) are Cytoplasmic-facing. The helical transmembrane segment at 142-162 (ILQYVWFKPFYCFGTLICSAW) threads the bilayer. At 163-168 (KLPKFE) the chain is on the extracellular side. The chain crosses the membrane as a helical span at residues 169 to 189 (IFLNVFYNISVTWSLYSLALF). Residues 190 to 205 (WKCLYPELTPYKPWLK) lie on the Cytoplasmic side of the membrane. A helical transmembrane segment spans residues 206–226 (FLCVKLIIFASYWQSIIIQGL). Residues 227–246 (VVTGKLGTGNQDRTSGYVYK) are Extracellular-facing. The chain crosses the membrane as a helical span at residues 247–267 (NGLLCIEMVPFAILHAVAFPW). The Cytoplasmic portion of the chain corresponds to 268–418 (NKYTAFSIPY…DVQSRSSMAC (151 aa)). The ATG8-interacting region stretch occupies residues 379 to 402 (RTFPEDPNYPVVHDYTMGHRYSRS).

This sequence belongs to the TMEM184 family. As to quaternary structure, interacts with ATG8.

The protein localises to the vacuole membrane. In terms of biological role, vacuole membrane protein that recruits ATG8 to facilitate the degradation of vacuolar integral membrane proteins during early-stationary vacuole turnover (EVT) when cells enter stationary phase. The chain is Vacuole membrane protein HFL1 from Saccharomyces cerevisiae (strain ATCC 204508 / S288c) (Baker's yeast).